We begin with the raw amino-acid sequence, 240 residues long: tRNA (guanine-N(1)-)-methyltransferase (240 aa).

Residues Gly-110 and 130–135 (VGDYVL) contribute to the S-adenosyl-L-methionine site.

This sequence belongs to the RNA methyltransferase TrmD family. In terms of assembly, homodimer.

It localises to the cytoplasm. The enzyme catalyses guanosine(37) in tRNA + S-adenosyl-L-methionine = N(1)-methylguanosine(37) in tRNA + S-adenosyl-L-homocysteine + H(+). Specifically methylates guanosine-37 in various tRNAs. In Borrelia recurrentis (strain A1), this protein is tRNA (guanine-N(1)-)-methyltransferase.